Reading from the N-terminus, the 115-residue chain is Toxin CSTX-9 (115 aa).

The N-terminal stretch at Met1–Ala20 is a signal peptide. The propeptide occupies Glu21–Arg47. 4 disulfide bridges follow: Cys53/Cys68, Cys60/Cys77, Cys67/Cys95, and Cys79/Cys93.

Belongs to the neurotoxin 19 (CSTX) family. In terms of assembly, monomer. Interacts with CSTX-13 (AC P83919) (Kd=370 nM), but does not interact with CSTX-1 (AC P81694). In terms of tissue distribution, expressed by the venom gland.

The protein resides in the secreted. It is found in the target cell membrane. Its function is as follows. Synergistic toxin that induces or increases a cytolytic effect when combined with CSTX-1 (AC P81694) or CSTX-13 (AC P83919). Potassium ions and M-ctenitoxin-Cs1a (AC P83619) have also an effect on its activity. When alone, has no insecticidal activity. The protein is Toxin CSTX-9 of Cupiennius salei (American wandering spider).